The following is a 127-amino-acid chain: Dual endothelin-1/VEGF signal peptide receptor (127 aa).

At 1–69 the chain is on the extracellular side; sequence MSTFYVTAVP…EMKSRWNWGS (69 aa). Residues 70–88 form a helical membrane-spanning segment; the sequence is ITCIMCFTCVGSQLSMSSS. The Cytoplasmic portion of the chain corresponds to 89–127; that stretch reads KASNFSGPLQLYQRGIGHITNPYRRPPAPAWPCSSSGTT.

In terms of tissue distribution, prominently expressed in brain and heart tissues. Weakly expressed in aorta, adrenal gland, and lung tissues.

Its subcellular location is the cell membrane. In the Dahl salt-resistant strain, acts as a dual receptor for both endothelin-1 and the signal sequence of vascular endothelial growth factor A and does not act as a receptor for angiotensin-2. Does not bind the VEGFA mature protein. In the Dahl salt-sensitive strain, acts as a dual endothelin-1/angiotensin-2 receptor that is functionally coupled to a calcium-mobilizing transduction system, responding equivalently to both endothelin-1/EDN1 and angiotensin-2 peptides in a highly specific manner. May play a role in angiogenesis with a significant role in cardiovascular and neural development. This Rattus norvegicus (Rat) protein is Dual endothelin-1/VEGF signal peptide receptor.